Consider the following 188-residue polypeptide: Elongation factor P (188 aa).

The residue at position 34 (K34) is an N6-(3,6-diaminohexanoyl)-5-hydroxylysine.

It belongs to the elongation factor P family. Post-translationally, may be beta-lysylated on the epsilon-amino group of Lys-34 by the combined action of EpmA and EpmB, and then hydroxylated on the C5 position of the same residue by EpmC (if this protein is present). Lysylation is critical for the stimulatory effect of EF-P on peptide-bond formation. The lysylation moiety may extend toward the peptidyltransferase center and stabilize the terminal 3-CCA end of the tRNA. Hydroxylation of the C5 position on Lys-34 may allow additional potential stabilizing hydrogen-bond interactions with the P-tRNA.

It is found in the cytoplasm. It participates in protein biosynthesis; polypeptide chain elongation. Involved in peptide bond synthesis. Alleviates ribosome stalling that occurs when 3 or more consecutive Pro residues or the sequence PPG is present in a protein, possibly by augmenting the peptidyl transferase activity of the ribosome. Modification of Lys-34 is required for alleviation. The polypeptide is Elongation factor P (Xylella fastidiosa (strain M23)).